We begin with the raw amino-acid sequence, 381 residues long: Cytochrome b (381 aa).

Helical transmembrane passes span 34–54 (FGSL…FLAM), 78–99 (WLIR…YLHI), 114–134 (WNIG…GYVL), and 179–199 (FFAF…IHLL). Heme b is bound by residues His84 and His98. Residues His183 and His197 each coordinate heme b. His202 is a binding site for a ubiquinone. Transmembrane regions (helical) follow at residues 227-247 (YKDL…ALFM), 289-309 (LGGV…PLLH), 321-341 (MTQI…WIGG), and 348-368 (FMMV…IIMP).

Belongs to the cytochrome b family. In terms of assembly, the cytochrome bc1 complex contains 3 respiratory subunits (MT-CYB, CYC1 and UQCRFS1), 2 core proteins (UQCRC1 and UQCRC2) and probably 6 low-molecular weight proteins. Requires heme b as cofactor.

Its subcellular location is the mitochondrion inner membrane. Its function is as follows. Component of the ubiquinol-cytochrome c reductase complex (complex III or cytochrome b-c1 complex) that is part of the mitochondrial respiratory chain. The b-c1 complex mediates electron transfer from ubiquinol to cytochrome c. Contributes to the generation of a proton gradient across the mitochondrial membrane that is then used for ATP synthesis. In Prionace glauca (Blue shark), this protein is Cytochrome b (mt-cyb).